Reading from the N-terminus, the 311-residue chain is 4-hydroxy-tetrahydrodipicolinate synthase (311 aa).

Residue T51 coordinates pyruvate. The Proton donor/acceptor role is filled by Y140. K168 functions as the Schiff-base intermediate with substrate in the catalytic mechanism. Position 209 (I209) interacts with pyruvate.

The protein belongs to the DapA family. Homotetramer; dimer of dimers.

It is found in the cytoplasm. It carries out the reaction L-aspartate 4-semialdehyde + pyruvate = (2S,4S)-4-hydroxy-2,3,4,5-tetrahydrodipicolinate + H2O + H(+). It participates in amino-acid biosynthesis; L-lysine biosynthesis via DAP pathway; (S)-tetrahydrodipicolinate from L-aspartate: step 3/4. Catalyzes the condensation of (S)-aspartate-beta-semialdehyde [(S)-ASA] and pyruvate to 4-hydroxy-tetrahydrodipicolinate (HTPA). In Streptococcus suis (strain 98HAH33), this protein is 4-hydroxy-tetrahydrodipicolinate synthase.